Consider the following 603-residue polypeptide: Elongation factor 4 (603 aa).

Residues Ser-6–Thr-188 form the tr-type G domain. Residues Asp-18 to Thr-23 and Asn-135 to Asp-138 contribute to the GTP site.

It belongs to the TRAFAC class translation factor GTPase superfamily. Classic translation factor GTPase family. LepA subfamily.

The protein resides in the cell membrane. It carries out the reaction GTP + H2O = GDP + phosphate + H(+). In terms of biological role, required for accurate and efficient protein synthesis under certain stress conditions. May act as a fidelity factor of the translation reaction, by catalyzing a one-codon backward translocation of tRNAs on improperly translocated ribosomes. Back-translocation proceeds from a post-translocation (POST) complex to a pre-translocation (PRE) complex, thus giving elongation factor G a second chance to translocate the tRNAs correctly. Binds to ribosomes in a GTP-dependent manner. The chain is Elongation factor 4 from Agathobacter rectalis (strain ATCC 33656 / DSM 3377 / JCM 17463 / KCTC 5835 / VPI 0990) (Eubacterium rectale).